A 229-amino-acid chain; its full sequence is Probable transmembrane reductase CYB561D1 (229 aa).

The Cytoplasmic portion of the chain corresponds to 1–24 (MHSMEVGLVPAPAREPRLTRWLRR). In terms of domain architecture, Cytochrome b561 spans 22–224 (LRRGSGILAH…HQISSSYLPR (203 aa)). A helical membrane pass occupies residues 25-45 (GSGILAHLIALGFTIFLTVLS). Over 46–53 (RPGTSLFS) the chain is Lumenal. A helical membrane pass occupies residues 54–74 (WHPVFMALAFCLCMAEAILLF). Position 55 (H55) interacts with heme b. At 75–91 (SPEHSLFFFCSRKTRIR) the chain is on the cytoplasmic side. Residues 92–112 (LHWAGQTMAILCAVLGLGFII) traverse the membrane as a helical segment. Heme b-binding residues include H93 and H127. Residues 113-128 (SSKIRSEMSHLVSWHS) lie on the Lumenal side of the membrane. The chain crosses the membrane as a helical span at residues 129–149 (WIGALTLLATGGQALCGLCLL). The Cytoplasmic portion of the chain corresponds to 150 to 169 (CPRAARVSRVARLKLYHLTC). H166 contributes to the heme b binding site. A helical membrane pass occupies residues 170-190 (GLVVYLMATVTVLLGMYSVWF). The Lumenal portion of the chain corresponds to 191-193 (QAQ). Residues 194-214 (IKGTAWYLCLGLPLYPALVIM) form a helical membrane-spanning segment. Residues 215-229 (HQISSSYLPRKKVEI) are Cytoplasmic-facing.

The cofactor is heme b.

The protein resides in the membrane. It catalyses the reaction monodehydro-L-ascorbate radical(out) + L-ascorbate(in) = monodehydro-L-ascorbate radical(in) + L-ascorbate(out). The catalysed reaction is Fe(3+)(out) + L-ascorbate(in) = monodehydro-L-ascorbate radical(in) + Fe(2+)(out) + H(+). Functionally, probable transmembrane reductase that may use ascorbate as an electron donor and transfer electrons across membranes to reduce monodehydro-L-ascorbate radical and iron cations Fe(3+) in another cellular compartment. This Mus musculus (Mouse) protein is Probable transmembrane reductase CYB561D1.